A 198-amino-acid chain; its full sequence is Holliday junction branch migration complex subunit RuvA (198 aa).

Residues 1 to 63 (MYDYIKGQLT…EDAQLLFGFH (63 aa)) form a domain I region. The tract at residues 64-142 (SEEEKDVFLK…EAPKEESSKP (79 aa)) is domain II. Residues 143-147 (PKAKQ) form a flexible linker region. Residues 148-198 (QGNEQLDEAVEALLALGYKATELKKIRAFFEGTSETAEQYIKSALKMLMKG) are domain III.

It belongs to the RuvA family. Homotetramer. Forms an RuvA(8)-RuvB(12)-Holliday junction (HJ) complex. HJ DNA is sandwiched between 2 RuvA tetramers; dsDNA enters through RuvA and exits via RuvB. An RuvB hexamer assembles on each DNA strand where it exits the tetramer. Each RuvB hexamer is contacted by two RuvA subunits (via domain III) on 2 adjacent RuvB subunits; this complex drives branch migration. In the full resolvosome a probable DNA-RuvA(4)-RuvB(12)-RuvC(2) complex forms which resolves the HJ.

Its subcellular location is the cytoplasm. Functionally, the RuvA-RuvB-RuvC complex processes Holliday junction (HJ) DNA during genetic recombination and DNA repair, while the RuvA-RuvB complex plays an important role in the rescue of blocked DNA replication forks via replication fork reversal (RFR). RuvA specifically binds to HJ cruciform DNA, conferring on it an open structure. The RuvB hexamer acts as an ATP-dependent pump, pulling dsDNA into and through the RuvAB complex. HJ branch migration allows RuvC to scan DNA until it finds its consensus sequence, where it cleaves and resolves the cruciform DNA. This chain is Holliday junction branch migration complex subunit RuvA, found in Streptococcus equi subsp. zooepidemicus (strain H70).